The primary structure comprises 428 residues: Phosphomethylpyrimidine synthase 2 (428 aa).

Residues methionine 94, tyrosine 123, histidine 162, 184–186 (SRG), 225–228 (NGMR), and glutamate 264 each bind substrate. Histidine 268 serves as a coordination point for Zn(2+). Tyrosine 291 lines the substrate pocket. Residue histidine 332 coordinates Zn(2+). Cysteine 408, cysteine 411, and cysteine 415 together coordinate [4Fe-4S] cluster.

It belongs to the ThiC family. The cofactor is [4Fe-4S] cluster.

The enzyme catalyses 5-amino-1-(5-phospho-beta-D-ribosyl)imidazole + S-adenosyl-L-methionine = 4-amino-2-methyl-5-(phosphooxymethyl)pyrimidine + CO + 5'-deoxyadenosine + formate + L-methionine + 3 H(+). The protein operates within cofactor biosynthesis; thiamine diphosphate biosynthesis. Functionally, catalyzes the synthesis of the hydroxymethylpyrimidine phosphate (HMP-P) moiety of thiamine from aminoimidazole ribotide (AIR) in a radical S-adenosyl-L-methionine (SAM)-dependent reaction. The protein is Phosphomethylpyrimidine synthase 2 of Methanosarcina mazei (strain ATCC BAA-159 / DSM 3647 / Goe1 / Go1 / JCM 11833 / OCM 88) (Methanosarcina frisia).